Here is a 496-residue protein sequence, read N- to C-terminus: UDP-N-acetylmuramoylalanine--D-glutamate ligase (496 aa).

130-136 (GTNGKTT) provides a ligand contact to ATP.

This sequence belongs to the MurCDEF family.

The protein resides in the cytoplasm. It carries out the reaction UDP-N-acetyl-alpha-D-muramoyl-L-alanine + D-glutamate + ATP = UDP-N-acetyl-alpha-D-muramoyl-L-alanyl-D-glutamate + ADP + phosphate + H(+). It participates in cell wall biogenesis; peptidoglycan biosynthesis. Its function is as follows. Cell wall formation. Catalyzes the addition of glutamate to the nucleotide precursor UDP-N-acetylmuramoyl-L-alanine (UMA). The protein is UDP-N-acetylmuramoylalanine--D-glutamate ligase of Mycobacterium bovis (strain ATCC BAA-935 / AF2122/97).